We begin with the raw amino-acid sequence, 208 residues long: NAD(P)H-quinone oxidoreductase subunit I (208 aa).

4Fe-4S ferredoxin-type domains are found at residues 55–84 (GRIH…VDWV) and 95–124 (RNYS…MTEE). [4Fe-4S] cluster contacts are provided by C64, C67, C70, C74, C104, C107, C110, and C114.

This sequence belongs to the complex I 23 kDa subunit family. As to quaternary structure, NDH-1 is composed of at least 11 different subunits. Requires [4Fe-4S] cluster as cofactor.

The protein resides in the cellular thylakoid membrane. The catalysed reaction is a plastoquinone + NADH + (n+1) H(+)(in) = a plastoquinol + NAD(+) + n H(+)(out). It catalyses the reaction a plastoquinone + NADPH + (n+1) H(+)(in) = a plastoquinol + NADP(+) + n H(+)(out). NDH-1 shuttles electrons from an unknown electron donor, via FMN and iron-sulfur (Fe-S) centers, to quinones in the respiratory and/or the photosynthetic chain. The immediate electron acceptor for the enzyme in this species is believed to be plastoquinone. Couples the redox reaction to proton translocation, and thus conserves the redox energy in a proton gradient. In Prochlorococcus marinus (strain MIT 9301), this protein is NAD(P)H-quinone oxidoreductase subunit I.